The chain runs to 527 residues: Tubulin-specific chaperone E (527 aa).

At serine 2 the chain carries N-acetylserine. The 45-residue stretch at 27–71 folds into the CAP-Gly domain; it reads GVVPPVAGPWLGVEWDNPERGKHDGSHEGTVYFQCRHPTGGSFIR. LRR repeat units lie at residues 154–175, 180–200, 205–226, 230–252, 253–274, 278–299, and 308–329; these read NIRK…IHIA, HLEV…SVLT, ALKV…RCAM, GLEE…DVLQ, TVKL…YLIA, RLEQ…DAGI, and SLKY…NELD. Residues 342–384 enclose the LRRCT domain; it reads NPLTKEDKEAETARLLIIASIGQLKTLNKCEILPEERRRAELD. Lysine 463 is subject to N6-acetyllysine. The residue at position 495 (serine 495) is a Phosphoserine.

This sequence belongs to the TBCE family. As to quaternary structure, supercomplex made of cofactors A to E. Cofactors A and D function by capturing and stabilizing tubulin in a quasi-native conformation. Cofactor E binds to the cofactor D-tubulin complex; interaction with cofactor C then causes the release of tubulin polypeptides that are committed to the native state. Cofactors B and E can form a heterodimer which binds to alpha-tubulin and enhances their ability to dissociate tubulin heterodimers. Interacts with TBCD.

The protein localises to the cytoplasm. It localises to the cytoskeleton. Its function is as follows. Tubulin-folding protein; involved in the second step of the tubulin folding pathway and in the regulation of tubulin heterodimer dissociation. Required for correct organization of microtubule cytoskeleton and mitotic splindle, and maintenance of the neuronal microtubule network. The protein is Tubulin-specific chaperone E (TBCE) of Pongo abelii (Sumatran orangutan).